An 85-amino-acid chain; its full sequence is Arminin 2b (85 aa).

A signal peptide spans 1–18 (MKTVFAILFLAFIALTYA). Positions 19–57 (RSYEDVKEEIKNEIEKEILEDLEEESDELNDKSKEINDA) are excised as a propeptide. Alanine amide is present on A82.

Belongs to the arminin family. In terms of tissue distribution, expressed in entodermal epithelium along the body column.

The protein localises to the secreted. Its subcellular location is the target cell membrane. Functionally, antimicrobial peptide with a broad-spectrum antimicrobial activity. Keeps its antibacterial activity under a wide range of salt concentrations that mimic physiological conditions of human blood, which is surprising, since Hydra is an obligate freshwater animal with nearly no salt tolerance. Does not affect red blood cells. This chain is Arminin 2b, found in Hydra vulgaris (Hydra).